A 197-amino-acid chain; its full sequence is Small ribosomal subunit protein uS4y (197 aa).

One can recognise an S4 RNA-binding domain in the interval 109–183 (RRLQTIVFKS…VKRRNERAGA (75 aa)). The tract at residues 161-197 (SLTSPFGGGRPGRVKRRNERAGAKKASGGDGDEDDEE) is disordered.

This sequence belongs to the universal ribosomal protein uS4 family. As to quaternary structure, binds to the translation initiation factors TIF3E1.

The chain is Small ribosomal subunit protein uS4y (RPS9C) from Arabidopsis thaliana (Mouse-ear cress).